The chain runs to 530 residues: Calcium/calmodulin-dependent protein kinase type II alpha chain (530 aa).

The region spanning Asp-12–Ile-272 is the Protein kinase domain. Residues Leu-20–Val-28 and Lys-43 contribute to the ATP site. Asp-136 functions as the Proton acceptor in the catalytic mechanism. Thr-287 carries the post-translational modification Phosphothreonine; by autocatalysis. The segment at Leu-291 to Lys-301 is calmodulin-binding. A phosphothreonine; by autocatalysis mark is found at Thr-306 and Thr-307. Positions Ile-320–Thr-358 are disordered. Ser-327 is subject to Phosphoserine.

Belongs to the protein kinase superfamily. CAMK Ser/Thr protein kinase family. CaMK subfamily. As to quaternary structure, interacts with CASK. Post-translationally, autophosphorylation at Thr-287 is independent of autophosphorylation at Thr-306 and Thr-307. Expressed at a high level in the central nervous system during the late embryonic stage. In adults, expression is more abundant in the head than in the body.

The enzyme catalyses L-seryl-[protein] + ATP = O-phospho-L-seryl-[protein] + ADP + H(+). It carries out the reaction L-threonyl-[protein] + ATP = O-phospho-L-threonyl-[protein] + ADP + H(+). Its activity is regulated as follows. CASK plays a role in regulation of CaMKII autophosphorylation. When complexed with CASK and in the presence Ca[2+]/CaM, autophosphorylation of Thr-287 causes constitutive activation of the kinase. In the absence of Ca[2+]/CaM, autophosphorylation of Thr-306 causes inactivation of the kinase. Its function is as follows. A key regulator of plasticity in synaptic physiology and behavior, alterations in its activity produce pleiotrophic effects that involve synaptic transmission and development as well as various aspects of behavior. Directly modulates eag potassium channels. The chain is Calcium/calmodulin-dependent protein kinase type II alpha chain (CaMKII) from Drosophila melanogaster (Fruit fly).